The following is a 601-amino-acid chain: Elongation factor 4 (601 aa).

Residues 7–189 (DNIRNFSIVA…AIVKRLPAPK (183 aa)) form the tr-type G domain. Residues 19 to 24 (DHGKST) and 136 to 139 (NKVD) contribute to the GTP site.

It belongs to the TRAFAC class translation factor GTPase superfamily. Classic translation factor GTPase family. LepA subfamily.

It localises to the cell inner membrane. The enzyme catalyses GTP + H2O = GDP + phosphate + H(+). In terms of biological role, required for accurate and efficient protein synthesis under certain stress conditions. May act as a fidelity factor of the translation reaction, by catalyzing a one-codon backward translocation of tRNAs on improperly translocated ribosomes. Back-translocation proceeds from a post-translocation (POST) complex to a pre-translocation (PRE) complex, thus giving elongation factor G a second chance to translocate the tRNAs correctly. Binds to ribosomes in a GTP-dependent manner. This is Elongation factor 4 from Methylorubrum extorquens (strain CM4 / NCIMB 13688) (Methylobacterium extorquens).